The chain runs to 60 residues: uncharacterized protein (60 aa).

This is an uncharacterized protein from Schizosaccharomyces pombe (strain 972 / ATCC 24843) (Fission yeast).